The sequence spans 751 residues: ABC transporter G family member 22 (751 aa).

The disordered stretch occupies residues 26–81 (ADIRSPHGSMDANGVPATAPAAVGGGGTLSRKSSRRLMGMSPGRSSGAGTHIRKSR). Residues 157–403 (LKFRDVTYKV…FSSIGCSPLI (247 aa)) enclose the ABC transporter domain. Position 197 to 204 (197 to 204 (GPSGSGKT)) interacts with ATP. In terms of domain architecture, ABC transmembrane type-2 spans 498-707 (EQYCILFCRG…TYKLLLKVQY (210 aa)). 6 helical membrane-spanning segments follow: residues 516–536 (FSWL…LLWW), 552–572 (LLFF…IFAF), 602–622 (LPLD…MTGL), 634–654 (LTVF…GAIL), 666–686 (VTVM…PVFI), and 722–742 (GLTE…LAYL).

It belongs to the ABC transporter superfamily. ABCG family. Eye pigment precursor importer (TC 3.A.1.204) subfamily.

The protein resides in the membrane. The chain is ABC transporter G family member 22 (ABCG22) from Arabidopsis thaliana (Mouse-ear cress).